The following is a 1009-amino-acid chain: Ulvan lyase, long isoform (1009 aa).

Positions 1–32 (MTAQKSKYFNRIMTMNTLLFSLLTVGFSQAYA) are cleaved as a signal peptide. 137-138 (SH) lines the substrate pocket. The Proton donor/acceptor role is filled by His-138. Asp-200, Asp-210, and Lys-212 together coordinate Ca(2+). Substrate-binding residues include Tyr-291 and Arg-308. Residues Asp-311, Asp-314, and Tyr-316 each coordinate Ca(2+). Tyr-372 serves as a coordination point for substrate.

Belongs to the polysaccharide lyase 24 family.

In terms of biological role, ulvan lyase involved in ulvan degradation. Ulvan is the main polysaccharide component of the Ulvales (green seaweed) cell wall. It is composed of disaccharide building blocks comprising 3-sulfated rhamnose (Rha3S) linked to D-glucuronic acid (GlcA), L-iduronic acid (IduA), or D-xylose (Xyl). Ulvan lyase catalyzes preferentially the endolytic cleavage of the glycosidic bond between Rha3S and the uronic acid GlcA, but not IduA, producing oligosaccharides that have unsaturated 4-deoxy-L-threo-hex-4-enopyranosiduronic acid (deltaUA) at the non-reducing end. The most abundant end products in the degradation of the ulvan polysaccharide were deltaUA-Rha3S disaccharides and deltaUA-Rha3S-IduA-Rha3S and deltaUA-Rha3S-Xyl-Rha3S tetrasaccharides. The polypeptide is Ulvan lyase, long isoform (ullA) (Glaciecola sp. (strain KUL10)).